The following is a 212-amino-acid chain: Large ribosomal subunit protein uL3 (212 aa).

The residue at position 153 (glutamine 153) is an N5-methylglutamine.

The protein belongs to the universal ribosomal protein uL3 family. Part of the 50S ribosomal subunit. Forms a cluster with proteins L14 and L19. Methylated by PrmB.

Functionally, one of the primary rRNA binding proteins, it binds directly near the 3'-end of the 23S rRNA, where it nucleates assembly of the 50S subunit. This is Large ribosomal subunit protein uL3 from Shewanella loihica (strain ATCC BAA-1088 / PV-4).